Consider the following 120-residue polypeptide: Large ribosomal subunit protein uL18 (120 aa).

It belongs to the universal ribosomal protein uL18 family. Part of the 50S ribosomal subunit; part of the 5S rRNA/L5/L18/L25 subcomplex. Contacts the 5S and 23S rRNAs.

In terms of biological role, this is one of the proteins that bind and probably mediate the attachment of the 5S RNA into the large ribosomal subunit, where it forms part of the central protuberance. This Staphylococcus epidermidis (strain ATCC 35984 / DSM 28319 / BCRC 17069 / CCUG 31568 / BM 3577 / RP62A) protein is Large ribosomal subunit protein uL18.